The following is a 757-amino-acid chain: Ecdysone receptor (757 aa).

The segment at 1–300 is modulating; that stretch reads MMKRRWSNNG…GPAPRLQEEL (300 aa). Disordered stretches follow at residues 126–192 and 235–289; these read NSVG…GGGG and LNHH…KKIK. The segment covering 128–138 has biased composition (gly residues); the sequence is VGGGGGGGGVP. Residues 167-183 show a composition bias toward low complexity; sequence NSNSNHSNSSSHHTNGH. 2 consecutive NR C4-type zinc fingers follow at residues 301 to 321 and 337 to 361; these read CLVCGDRASGYHYNALTCEGC and CKFGHACEMDMYMRRKCQECRLKKC. Positions 301 to 373 form a DNA-binding region, nuclear receptor; the sequence is CLVCGDRASG…VGMRPECVVP (73 aa). Residues 442 to 677 form the NR LBD domain; that stretch reads NQLAVIYKLI…FLEEIWDVHA (236 aa). Positions 717–734 are enriched in low complexity; it reads TSMATSSSSSLSPSAAST. The tract at residues 717–739 is disordered; it reads TSMATSSSSSLSPSAASTPNGGA.

This sequence belongs to the nuclear hormone receptor family. NR1 subfamily.

The protein resides in the nucleus. Functionally, receptor for ecdysone. Binds to ecdysone response elements (ECRES). The chain is Ecdysone receptor (EcR) from Lucilia cuprina (Green bottle fly).